The sequence spans 663 residues: Leishmanolysin-like peptidase (663 aa).

Residue histidine 246 coordinates Zn(2+). The active site involves glutamate 247. Residues histidine 250 and histidine 353 each contribute to the Zn(2+) site.

This sequence belongs to the peptidase M8 family. Requires Zn(2+) as cofactor.

It localises to the cytoplasm. Functionally, essential for the coordination of mitotic progression, and also plays a role in cell migration. In Caenorhabditis elegans, this protein is Leishmanolysin-like peptidase.